Here is a 77-residue protein sequence, read N- to C-terminus: DNA-directed RNA polymerase subunit Rpo5 (77 aa).

This sequence belongs to the archaeal Rpo5/eukaryotic RPB5 RNA polymerase subunit family. Part of the RNA polymerase complex.

Its subcellular location is the cytoplasm. It carries out the reaction RNA(n) + a ribonucleoside 5'-triphosphate = RNA(n+1) + diphosphate. Functionally, DNA-dependent RNA polymerase (RNAP) catalyzes the transcription of DNA into RNA using the four ribonucleoside triphosphates as substrates. This chain is DNA-directed RNA polymerase subunit Rpo5, found in Methanothermobacter thermautotrophicus (strain ATCC 29096 / DSM 1053 / JCM 10044 / NBRC 100330 / Delta H) (Methanobacterium thermoautotrophicum).